The chain runs to 196 residues: dTTP/UTP pyrophosphatase (196 aa).

The active-site Proton acceptor is the Asp72.

This sequence belongs to the Maf family. YhdE subfamily. It depends on a divalent metal cation as a cofactor.

The protein localises to the cytoplasm. It catalyses the reaction dTTP + H2O = dTMP + diphosphate + H(+). The enzyme catalyses UTP + H2O = UMP + diphosphate + H(+). Functionally, nucleoside triphosphate pyrophosphatase that hydrolyzes dTTP and UTP. May have a dual role in cell division arrest and in preventing the incorporation of modified nucleotides into cellular nucleic acids. The sequence is that of dTTP/UTP pyrophosphatase from Chlamydia felis (strain Fe/C-56) (Chlamydophila felis).